Here is a 240-residue protein sequence, read N- to C-terminus: Ubiquinone biosynthesis O-methyltransferase (240 aa).

Residues Arg-44, Gly-64, Asp-85, and Met-129 each contribute to the S-adenosyl-L-methionine site.

It belongs to the methyltransferase superfamily. UbiG/COQ3 family.

It catalyses the reaction a 3-demethylubiquinol + S-adenosyl-L-methionine = a ubiquinol + S-adenosyl-L-homocysteine + H(+). It carries out the reaction a 3-(all-trans-polyprenyl)benzene-1,2-diol + S-adenosyl-L-methionine = a 2-methoxy-6-(all-trans-polyprenyl)phenol + S-adenosyl-L-homocysteine + H(+). The protein operates within cofactor biosynthesis; ubiquinone biosynthesis. O-methyltransferase that catalyzes the 2 O-methylation steps in the ubiquinone biosynthetic pathway. In Escherichia coli O127:H6 (strain E2348/69 / EPEC), this protein is Ubiquinone biosynthesis O-methyltransferase.